We begin with the raw amino-acid sequence, 120 residues long: UPF0231 protein YacL (120 aa).

This sequence belongs to the UPF0231 family.

The protein is UPF0231 protein YacL of Escherichia fergusonii (strain ATCC 35469 / DSM 13698 / CCUG 18766 / IAM 14443 / JCM 21226 / LMG 7866 / NBRC 102419 / NCTC 12128 / CDC 0568-73).